A 365-amino-acid chain; its full sequence is Putative F-box protein At1g31000 (365 aa).

Positions 15–62 constitute an F-box domain; that stretch reads NDSDSVRIDIVIEIVKRLPLKDVSRFLLVSKLWSEIIRSPYFIRSFPF.

The protein is Putative F-box protein At1g31000 of Arabidopsis thaliana (Mouse-ear cress).